The primary structure comprises 159 residues: Transcription elongation factor A protein-like 1 (159 aa).

The segment at 1–120 is disordered; it reads MEKACKEPEE…PQFRGDIHGR (120 aa). Basic and acidic residues predominate over residues 17-34; the sequence is KADEERPSVEPSPEKSSP. The segment covering 37-54 has biased composition (acidic residues); it reads QSSEEVSSEEEFFPDELL. Basic and acidic residues-rich tracts occupy residues 64–80 and 95–119; these read SEER…DLFE and HKLE…DIHG.

It belongs to the TFS-II family. TFA subfamily.

Its subcellular location is the nucleus. Its function is as follows. May be involved in transcriptional regulation. Modulates various viral and cellular promoters in a promoter context-dependent manner. Does not bind DNA directly. The sequence is that of Transcription elongation factor A protein-like 1 from Bos taurus (Bovine).